Reading from the N-terminus, the 228-residue chain is uncharacterized protein (228 aa).

Positions 196-228 form a coiled coil; the sequence is VKITELLDKAKISINDLNKTIEKLNETVNKYHG.

This is an uncharacterized protein from Acanthamoeba polyphaga (Amoeba).